We begin with the raw amino-acid sequence, 143 residues long: Ayaconin (143 aa).

Residues 1–22 (MSFLFFLVVLISIGLWVGPCVA) form the signal peptide.

Interacts with human F12 (inactive). In terms of tissue distribution, salivary gland.

The protein resides in the secreted. Inhibits the intrinsic blood coagulation pathway in the host by blocking activation of host coagulation factor XII (F12). The protein is Ayaconin of Lutzomyia ayacuchensis (Sand fly).